A 260-amino-acid polypeptide reads, in one-letter code: Hydroxyethylthiazole kinase 1 (260 aa).

Position 39 (Met39) interacts with substrate. 2 residues coordinate ATP: Arg115 and Thr160. Gly187 lines the substrate pocket.

This sequence belongs to the Thz kinase family. The cofactor is Mg(2+).

The catalysed reaction is 5-(2-hydroxyethyl)-4-methylthiazole + ATP = 4-methyl-5-(2-phosphooxyethyl)-thiazole + ADP + H(+). It participates in cofactor biosynthesis; thiamine diphosphate biosynthesis; 4-methyl-5-(2-phosphoethyl)-thiazole from 5-(2-hydroxyethyl)-4-methylthiazole: step 1/1. Functionally, catalyzes the phosphorylation of the hydroxyl group of 4-methyl-5-beta-hydroxyethylthiazole (THZ). The sequence is that of Hydroxyethylthiazole kinase 1 from Streptococcus pneumoniae serotype 2 (strain D39 / NCTC 7466).